A 92-amino-acid chain; its full sequence is Small ribosomal subunit protein uS19 (92 aa).

Belongs to the universal ribosomal protein uS19 family.

Functionally, protein S19 forms a complex with S13 that binds strongly to the 16S ribosomal RNA. The chain is Small ribosomal subunit protein uS19 from Buchnera aphidicola subsp. Baizongia pistaciae (strain Bp).